We begin with the raw amino-acid sequence, 251 residues long: tRNA (guanine-N(7)-)-methyltransferase (251 aa).

S-adenosyl-L-methionine contacts are provided by residues glycine 72, 95-96 (EI), 132-133 (NA), and leucine 152. The active site involves aspartate 155. An S-adenosyl-L-methionine-binding site is contributed by 230 to 232 (SEE).

It belongs to the class I-like SAM-binding methyltransferase superfamily. TrmB family.

It is found in the nucleus. It catalyses the reaction guanosine(46) in tRNA + S-adenosyl-L-methionine = N(7)-methylguanosine(46) in tRNA + S-adenosyl-L-homocysteine. The protein operates within tRNA modification; N(7)-methylguanine-tRNA biosynthesis. Catalyzes the formation of N(7)-methylguanine at position 46 (m7G46) in tRNA. The sequence is that of tRNA (guanine-N(7)-)-methyltransferase from Drosophila willistoni (Fruit fly).